The sequence spans 477 residues: Tripartite motif-containing protein 72 (477 aa).

16 residues coordinate Zn(2+): Leu-14, Pro-17, Pro-29, Cys-31, Thr-34, Gln-37, Thr-53, Pro-56, Gly-86, Leu-89, Val-97, Glu-100, Leu-105, Gly-108, Gly-114, and Lys-117. Residues 16–59 (CPLCLELFRAPVTPECGHTFCQGCLTGAPKNQDQNGSTPCPTCQ) form an RING-type zinc finger. A B box-type zinc finger spans residues 83–124 (VPKGHCLEHLDPLSVYCEQDKELICGVCASLGKHKGHNIITA). Residues 135-232 (LPQQQVILQE…QMDGVLKDVE (98 aa)) adopt a coiled-coil conformation. Residues 272-476 (DEFKFQVWRK…LKIFYPPAEQ (205 aa)) form the B30.2/SPRY domain.

Belongs to the TRIM/RBCC family. In terms of assembly, homodimer. Homooligomer; disulfide-linked. Oligomerizes on the phospholipid membrane. In terms of processing, disulfide bond formation at Cys-244 occurs in case of membrane damage that cause the entry of the oxidized milieu of the extracellular space, resulting in homooligomerization.

Its subcellular location is the cell membrane. The protein resides in the sarcolemma. It is found in the cytoplasmic vesicle membrane. It catalyses the reaction S-ubiquitinyl-[E2 ubiquitin-conjugating enzyme]-L-cysteine + [acceptor protein]-L-lysine = [E2 ubiquitin-conjugating enzyme]-L-cysteine + N(6)-ubiquitinyl-[acceptor protein]-L-lysine.. It participates in protein modification; protein ubiquitination. Specifically binds phosphatidylserine. The binding to phospholipids enhances ubiquitination activity. In terms of biological role, muscle-specific E3 ubiquitin-protein ligase that plays a central role in cell membrane repair by nucleating the assembly of the repair machinery at injury sites. Acts as a sensor of oxidation: upon membrane damage, entry of extracellular oxidative environment results in disulfide bond formation and homooligomerization at the injury site. This oligomerization acts as a nucleation site for recruitment of TRIM72-containing vesicles to the injury site, leading to membrane patch formation. Probably acts upstream of the Ca(2+)-dependent membrane resealing process. Required for transport of DYSF to sites of cell injury during repair patch formation. Regulates membrane budding and exocytosis. May be involved in the regulation of the mobility of KCNB1-containing endocytic vesicles. The sequence is that of Tripartite motif-containing protein 72 (trim72) from Xenopus tropicalis (Western clawed frog).